Here is a 108-residue protein sequence, read N- to C-terminus: UPF0060 membrane protein YnfA (108 aa).

At 1 to 5 (MLKTT) the chain is on the periplasmic side. Residues 6-26 (LLFFVTALCEIIGCFLPWLWI) traverse the membrane as a helical segment. The Cytoplasmic portion of the chain corresponds to 27-30 (KRGA). Residues 31–51 (SVWWLLPAAASLALFVWLLTL) form a helical membrane-spanning segment. Over 52–60 (HPAASGRVY) the chain is Periplasmic. The helical transmembrane segment at 61–81 (AAYGGVYVCTALLWLRVVDGV) threads the bilayer. Residues 82-84 (RLT) are Cytoplasmic-facing. The chain crosses the membrane as a helical span at residues 85-105 (VYDWCGALIALCGMLIIVVGW). Over 106–108 (GRT) the chain is Periplasmic.

It belongs to the UPF0060 family.

Its subcellular location is the cell inner membrane. This is UPF0060 membrane protein YnfA from Salmonella paratyphi A (strain ATCC 9150 / SARB42).